Reading from the N-terminus, the 335-residue chain is F420-dependent glucose-6-phosphate dehydrogenase (335 aa).

D40 serves as a coordination point for coenzyme F420-(gamma-Glu)n. The Proton donor role is filled by H41. Coenzyme F420-(gamma-Glu)n contacts are provided by residues T77 and 108-109 (TG). E110 (proton acceptor) is an active-site residue. Coenzyme F420-(gamma-Glu)n is bound by residues N113, 177–178 (GG), and 180–181 (VV). Residues T195, K198, K259, and R283 each contribute to the substrate site.

The protein belongs to the F420-dependent glucose-6-phosphate dehydrogenase family. In terms of assembly, homodimer.

The catalysed reaction is oxidized coenzyme F420-(gamma-L-Glu)(n) + D-glucose 6-phosphate + H(+) = 6-phospho-D-glucono-1,5-lactone + reduced coenzyme F420-(gamma-L-Glu)(n). Its function is as follows. Catalyzes the coenzyme F420-dependent oxidation of glucose 6-phosphate (G6P) to 6-phosphogluconolactone. The polypeptide is F420-dependent glucose-6-phosphate dehydrogenase (Segniliparus rotundus (strain ATCC BAA-972 / CDC 1076 / CIP 108378 / DSM 44985 / JCM 13578)).